We begin with the raw amino-acid sequence, 283 residues long: Shikimate kinase (283 aa).

86–96 is an ATP binding site; sequence PLKSGLSSSSA.

Belongs to the GHMP kinase family. Archaeal shikimate kinase subfamily.

It is found in the cytoplasm. The catalysed reaction is shikimate + ATP = 3-phosphoshikimate + ADP + H(+). It functions in the pathway metabolic intermediate biosynthesis; chorismate biosynthesis; chorismate from D-erythrose 4-phosphate and phosphoenolpyruvate: step 5/7. The protein is Shikimate kinase of Methanococcus vannielii (strain ATCC 35089 / DSM 1224 / JCM 13029 / OCM 148 / SB).